The primary structure comprises 248 residues: UPF0273 protein APE_1505.1 (248 aa).

In terms of domain architecture, KaiC spans 3-247; that stretch reads DRVKTGIPGM…VVRIGRRVSI (245 aa). 30 to 37 is an ATP binding site; the sequence is GGPGTGKS.

The protein belongs to the UPF0273 family.

This Aeropyrum pernix (strain ATCC 700893 / DSM 11879 / JCM 9820 / NBRC 100138 / K1) protein is UPF0273 protein APE_1505.1.